Consider the following 360-residue polypeptide: Photosystem II protein D1 (360 aa).

Helical transmembrane passes span 29–46 (YIGWFGVVMIPTLLTATS), 118–133 (HFLLGVCCYIGREWEL), and 142–156 (WISVAFTAPVAAAAA). His118 is a binding site for chlorophyll a. Tyr126 contacts pheophytin a. The [CaMn4O5] cluster site is built by Asp170 and Glu189. Residues 197 to 218 (FHQLGVAGVFGGSLFSAMHGSL) traverse the membrane as a helical segment. Residue His198 coordinates chlorophyll a. Residues His215 and 264-265 (SF) each bind a quinone. His215 contacts Fe cation. His272 serves as a coordination point for Fe cation. A helical transmembrane segment spans residues 274–288 (FLGAWPVVGIWLTSM). Positions 332, 333, 342, and 344 each coordinate [CaMn4O5] cluster. Positions 345–360 (SGDSCPVALVAPSING) are excised as a propeptide.

The protein belongs to the reaction center PufL/M/PsbA/D family. PSII is composed of 1 copy each of membrane proteins PsbA, PsbB, PsbC, PsbD, PsbE, PsbF, PsbH, PsbI, PsbJ, PsbK, PsbL, PsbM, PsbT, PsbX, PsbY, PsbZ, Psb30/Ycf12, at least 3 peripheral proteins of the oxygen-evolving complex and a large number of cofactors. It forms dimeric complexes. Requires The D1/D2 heterodimer binds P680, chlorophylls that are the primary electron donor of PSII, and subsequent electron acceptors. It shares a non-heme iron and each subunit binds pheophytin, quinone, additional chlorophylls, carotenoids and lipids. D1 provides most of the ligands for the Mn4-Ca-O5 cluster of the oxygen-evolving complex (OEC). There is also a Cl(-1) ion associated with D1 and D2, which is required for oxygen evolution. The PSII complex binds additional chlorophylls, carotenoids and specific lipids. as cofactor. In terms of processing, tyr-161 forms a radical intermediate that is referred to as redox-active TyrZ, YZ or Y-Z. Post-translationally, C-terminally processed by CTPA; processing is essential to allow assembly of the oxygen-evolving complex and thus photosynthetic growth.

It is found in the plastid. Its subcellular location is the chloroplast thylakoid membrane. The enzyme catalyses 2 a plastoquinone + 4 hnu + 2 H2O = 2 a plastoquinol + O2. In terms of biological role, photosystem II (PSII) is a light-driven water:plastoquinone oxidoreductase that uses light energy to abstract electrons from H(2)O, generating O(2) and a proton gradient subsequently used for ATP formation. It consists of a core antenna complex that captures photons, and an electron transfer chain that converts photonic excitation into a charge separation. The D1/D2 (PsbA/PsbD) reaction center heterodimer binds P680, the primary electron donor of PSII as well as several subsequent electron acceptors. The chain is Photosystem II protein D1 from Palmaria palmata (Dulse).